Here is a 165-residue protein sequence, read N- to C-terminus: V-type proton ATPase 16 kDa proteolipid subunit (165 aa).

Topologically, residues 1 to 10 (MSSVFSGDET) are lumenal. The chain crosses the membrane as a helical span at residues 11–33 (APFFGFLGAAAALVFSCMGAAYG). Over 34–55 (TAKSGVGVASMGVMRPELVMKS) the chain is Cytoplasmic. A helical membrane pass occupies residues 56 to 76 (IVPVVMAGVLGIYGLIIAVII). The Lumenal portion of the chain corresponds to 77 to 95 (STGINPKAKPYFLFDGYAH). The helical transmembrane segment at 96-117 (LSSGLACGLAGLAAGMAIGIVG) threads the bilayer. Topologically, residues 118–129 (DAGVRANAQQPK) are cytoplasmic. Residues 130 to 155 (LFVGMILILIFAEALALYGLIVGIIL) traverse the membrane as a helical segment. The Lumenal segment spans residues 156–165 (SSRAGQSRAD).

It belongs to the V-ATPase proteolipid subunit family. V-ATPase is a heteromultimeric enzyme composed of a peripheral catalytic V1 complex (main components: subunits A, B, C, D, E, and F) attached to an integral membrane V0 proton pore complex (main component: the proteolipid protein; which is present as a hexamer that forms the proton-conducting pore).

It localises to the vacuole membrane. In terms of biological role, proton-conducting pore forming subunit of the membrane integral V0 complex of vacuolar ATPase. V-ATPase is responsible for acidifying a variety of intracellular compartments in eukaryotic cells. The sequence is that of V-type proton ATPase 16 kDa proteolipid subunit (VATP-P1) from Avena sativa (Oat).